Here is a 318-residue protein sequence, read N- to C-terminus: Ribose-phosphate pyrophosphokinase (318 aa).

Residues 46 to 48 (DGE) and 105 to 106 (RQ) contribute to the ATP site. Histidine 139 and aspartate 178 together coordinate Mg(2+). Lysine 201 is an active-site residue. D-ribose 5-phosphate contacts are provided by residues arginine 203, aspartate 227, and 231–235 (DTAGT).

The protein belongs to the ribose-phosphate pyrophosphokinase family. Class I subfamily. In terms of assembly, homohexamer. Mg(2+) is required as a cofactor.

It is found in the cytoplasm. It carries out the reaction D-ribose 5-phosphate + ATP = 5-phospho-alpha-D-ribose 1-diphosphate + AMP + H(+). It functions in the pathway metabolic intermediate biosynthesis; 5-phospho-alpha-D-ribose 1-diphosphate biosynthesis; 5-phospho-alpha-D-ribose 1-diphosphate from D-ribose 5-phosphate (route I): step 1/1. Involved in the biosynthesis of the central metabolite phospho-alpha-D-ribosyl-1-pyrophosphate (PRPP) via the transfer of pyrophosphoryl group from ATP to 1-hydroxyl of ribose-5-phosphate (Rib-5-P). The protein is Ribose-phosphate pyrophosphokinase of Helicobacter pylori (strain J99 / ATCC 700824) (Campylobacter pylori J99).